Reading from the N-terminus, the 1755-residue chain is Transposon Ty1-OR Gag-Pol polyprotein (1755 aa).

Composition is skewed to polar residues over residues 1–10 (MESQQLSNYP), 48–60 (TKAN…TPAS), and 127–152 (QSQF…GNTF). Disordered regions lie at residues 1-93 (MESQ…MMTQ), 126-173 (PQSQ…RPPP), and 352-421 (GSRN…SKST). Positions 153–165 (TDSSSADSDMTST) are enriched in low complexity. The segment at 299–401 (NNGIHINNKV…NSKSKTARAH (103 aa)) is RNA-binding. The span at 402 to 418 (NVSTSNNSPSTDNDSIS) shows a compositional bias: low complexity. At S416 the chain carries Phosphoserine. Residue D461 is the For protease activity; shared with dimeric partner of the active site. The interval 583–640 (NVHTSESTRKYPYPFIHRMLAHANAQTIRYSLKNNTITYFNESDVDWSSAIDYQCPDC) is integrase-type zinc finger-like. In terms of domain architecture, Integrase catalytic spans 660-835 (NSYEPFQYLH…AGLDISTLLP (176 aa)). Residues D671 and D736 each contribute to the Mg(2+) site. 3 disordered regions span residues 956-1087 (SKAV…ETEK), 1092-1111 (RSPS…NIVP), and 1130-1187 (DLPL…DNET). Low complexity predominate over residues 960 to 969 (SPTDSTPPST). The span at 1005–1015 (STPQISNIEST) shows a compositional bias: polar residues. Residues 1038–1053 (ESSHASKSKDFRHSDS) show a composition bias toward basic and acidic residues. Composition is skewed to polar residues over residues 1054–1082 (YSEN…QISD) and 1101–1111 (PENNSSHNIVP). Residues 1178-1212 (KKRSLEDNETEIKVSRDTWNTKNMRSLEPPRSKKR) carry the Bipartite nuclear localization signal motif. The 139-residue stretch at 1338–1476 (NNYYITQLDI…DILGLEIKYQ (139 aa)) folds into the Reverse transcriptase Ty1/copia-type domain. Residues D1346, D1427, D1428, D1610, E1652, and D1685 each contribute to the Mg(2+) site. Residues 1610–1752 (DASYGNQPYY…IKTFKLLTNK (143 aa)) enclose the RNase H Ty1/copia-type domain.

In terms of assembly, the capsid protein forms a homotrimer, from which the VLPs are assembled. The protease is a homodimer, whose active site consists of two apposed aspartic acid residues. Post-translationally, initially, virus-like particles (VLPs) are composed of the structural unprocessed proteins Gag and Gag-Pol, and also contain the host initiator methionine tRNA (tRNA(i)-Met) which serves as a primer for minus-strand DNA synthesis, and a dimer of genomic Ty RNA. Processing of the polyproteins occurs within the particle and proceeds by an ordered pathway, called maturation. First, the protease (PR) is released by autocatalytic cleavage of the Gag-Pol polyprotein yielding capsid protein p45 and a Pol-p154 precursor protein. This cleavage is a prerequisite for subsequent processing of Pol-p154 at the remaining sites to release the mature structural and catalytic proteins. Maturation takes place prior to the RT reaction and is required to produce transposition-competent VLPs.

It localises to the cytoplasm. The protein localises to the nucleus. It carries out the reaction DNA(n) + a 2'-deoxyribonucleoside 5'-triphosphate = DNA(n+1) + diphosphate. The enzyme catalyses Endonucleolytic cleavage to 5'-phosphomonoester.. Capsid protein (CA) is the structural component of the virus-like particle (VLP), forming the shell that encapsulates the retrotransposons dimeric RNA genome. The particles are assembled from trimer-clustered units and there are holes in the capsid shells that allow for the diffusion of macromolecules. CA also has nucleocapsid-like chaperone activity, promoting primer tRNA(i)-Met annealing to the multipartite primer-binding site (PBS), dimerization of Ty1 RNA and initiation of reverse transcription. Its function is as follows. The aspartyl protease (PR) mediates the proteolytic cleavages of the Gag and Gag-Pol polyproteins after assembly of the VLP. Functionally, reverse transcriptase/ribonuclease H (RT) is a multifunctional enzyme that catalyzes the conversion of the retro-elements RNA genome into dsDNA within the VLP. The enzyme displays a DNA polymerase activity that can copy either DNA or RNA templates, and a ribonuclease H (RNase H) activity that cleaves the RNA strand of RNA-DNA heteroduplexes during plus-strand synthesis and hydrolyzes RNA primers. The conversion leads to a linear dsDNA copy of the retrotransposon that includes long terminal repeats (LTRs) at both ends. In terms of biological role, integrase (IN) targets the VLP to the nucleus, where a subparticle preintegration complex (PIC) containing at least integrase and the newly synthesized dsDNA copy of the retrotransposon must transit the nuclear membrane. Once in the nucleus, integrase performs the integration of the dsDNA into the host genome. The polypeptide is Transposon Ty1-OR Gag-Pol polyprotein (TY1B-OR) (Saccharomyces cerevisiae (strain ATCC 204508 / S288c) (Baker's yeast)).